The primary structure comprises 488 residues: MFLLLLLIPLIGIGFVTIEGNYGLSLINNIRIKSIALTTSIINLVVSLIMFILFDFSSKQFQFIEEHYQISYFDIYLGVDGLSIYFILLTTIIMPIAILCNWNSIQSKNVLSFVVIMLLLETLLLAVFLVLDVLLFYIFFESILPPLFLLIGLFGSSNKVRASFYLFLYTLLGSLFMLLSIVAMSSIMGTTDFDALSKSNFNYVTQLFLFYGIFIAFAVKTPVSFLNTWLLKAHVESPLSGSIILAGIVLKLSLYGIFRLILPLLPKASLNYTYIIYVIGVITIIYASFSTLRTIDIKELIAYSSVSHAAVYSIGAFSNTIQGIEGSIALGLAHGFVSSGLFICAGGILYDRSSTRLITYYRGMAQVMPIFSVLFFILSLGNSGTPLTLNFIGEFMSLYGVFERMPLLGVLASTSIVFSAAYTIFMYNRIVFGGSYSIYFVENIGDVTRREFIMLLVFVVLTVLFGIYPAPILDGLHYSVSSLIYSIN.

Helical transmembrane passes span 1 to 21 (MFLL…IEGN), 34 to 54 (SIAL…FILF), 79 to 99 (VDGL…IAIL), 110 to 130 (VLSF…VFLV), 134 to 154 (LLFY…IGLF), 164 to 184 (FYLF…IVAM), 207 to 227 (LFLF…SFLN), 238 to 258 (PLSG…YGIF), 272 to 292 (YTYI…FSTL), 301 to 321 (IAYS…SNTI), 328 to 348 (IALG…AGGI), 367 to 387 (VMPI…GTPL), 407 to 427 (LLGV…IFMY), and 452 to 472 (FIML…PAPI).

It belongs to the complex I subunit 4 family.

It localises to the mitochondrion membrane. The catalysed reaction is a ubiquinone + NADH + 5 H(+)(in) = a ubiquinol + NAD(+) + 4 H(+)(out). Its function is as follows. Core subunit of the mitochondrial membrane respiratory chain NADH dehydrogenase (Complex I) that is believed to belong to the minimal assembly required for catalysis. Complex I functions in the transfer of electrons from NADH to the respiratory chain. The immediate electron acceptor for the enzyme is believed to be ubiquinone. The sequence is that of NADH-ubiquinone oxidoreductase chain 4 (ND4) from Aspergillus amstelodami.